Here is a 154-residue protein sequence, read N- to C-terminus: Prefoldin subunit 5 (154 aa).

At Ala-2 the chain carries N-acetylalanine. Lys-42 carries the N6-acetyllysine modification. The residue at position 56 (Ser-56) is a Phosphoserine.

It belongs to the prefoldin subunit alpha family. In terms of assembly, heterohexamer of two PFD-alpha type and four PFD-beta type subunits.

Its subcellular location is the nucleus. Its function is as follows. Binds specifically to cytosolic chaperonin (c-CPN) and transfers target proteins to it. Binds to nascent polypeptide chain and promotes folding in an environment in which there are many competing pathways for nonnative proteins. Represses the transcriptional activity of MYC. The polypeptide is Prefoldin subunit 5 (Pfdn5) (Mus musculus (Mouse)).